Reading from the N-terminus, the 230-residue chain is Claudin-2 (230 aa).

The Cytoplasmic portion of the chain corresponds to 1–7; the sequence is MASLGLQ. Residues 8–28 traverse the membrane as a helical segment; sequence LVGYILGLLGLLGTLVAMLLP. At 29-81 the chain is on the extracellular side; that stretch reads SWKTSSYVGASIVTAVGFSKGLWMECATHSTGITQCDIYSTLLGLPADIQAAQ. A disulfide bridge connects residues cysteine 54 and cysteine 64. A helical membrane pass occupies residues 82-102; it reads AMMVTSSAISSLACIISVVGM. Over 103 to 116 the chain is Cytoplasmic; the sequence is RCTVFCQESRAKDR. Residues 117–137 traverse the membrane as a helical segment; sequence VAVAGGVFFILGGLLGFIPVA. Over 138–162 the chain is Extracellular; sequence WNLHGILRDFYSPLVPDSMKFEIGE. The chain crosses the membrane as a helical span at residues 163–183; sequence ALYLGIISSLFSLIAGIILCF. Residues 184 to 230 are Cytoplasmic-facing; the sequence is SCSSQRNRSNYYDAYQAQPLATRSSPRPGQPPKVKSEFNSYSLTGYV. Positions 205–230 are disordered; that stretch reads TRSSPRPGQPPKVKSEFNSYSLTGYV. Residue lysine 218 forms a Glycyl lysine isopeptide (Lys-Gly) (interchain with G-Cter in SUMO) linkage. 2 positions are modified to phosphoserine: serine 219 and serine 223. Positions 220 to 230 are enriched in polar residues; the sequence is EFNSYSLTGYV. An interactions with TJP1, TJP2 and TJP3 region spans residues 229–230; that stretch reads YV.

Belongs to the claudin family. In terms of assembly, can form homo- and heteropolymers with other claudins to mediate paracellular barrier and channel functions of tight junctions in response to physiological stimuli. Homopolymers interact with CLDN3, but not CLDN1, homopolymers. Directly interacts with TJP1/ZO-1, TJP2/ZO-2 and TJP3/ZO-3. The disulfide bond is necessary for pore formation, but is not required for correct protein trafficking.

It localises to the cell junction. Its subcellular location is the tight junction. The protein resides in the cell membrane. The catalysed reaction is Na(+)(in) = Na(+)(out). It carries out the reaction K(+)(in) = K(+)(out). The enzyme catalyses Rb(+)(in) = Rb(+)(out). It catalyses the reaction Li(+)(in) = Li(+)(out). The catalysed reaction is Cs(+)(in) = Cs(+)(out). It carries out the reaction Ca(2+)(in) = Ca(2+)(out). The enzyme catalyses methylamine(out) = methylamine(in). It catalyses the reaction choline(out) = choline(in). The catalysed reaction is H2O(in) = H2O(out). Its function is as follows. Forms paracellular channels: polymerizes in tight junction strands with cation- and water-selective channels through the strands, conveying epithelial permeability in a process known as paracellular tight junction permeability. In intestinal epithelium, allows for sodium and water fluxes from the peritoneal side to the lumen of the intestine to regulate nutrient absorption and clear enteric pathogens as part of mucosal immune response. In kidney, allows passive sodium and calcium reabsorption across proximal tubules from the lumen back to the bloodstream. In the hepatobiliary tract, allows paracellular water and cation fluxes in the hepatic perivenous areas and biliary epithelium to generate bile flow and maintain osmotic gradients. In Homo sapiens (Human), this protein is Claudin-2.